The chain runs to 141 residues: Large ribosomal subunit protein uL11 (141 aa).

It belongs to the universal ribosomal protein uL11 family. As to quaternary structure, part of the ribosomal stalk of the 50S ribosomal subunit. Interacts with L10 and the large rRNA to form the base of the stalk. L10 forms an elongated spine to which L12 dimers bind in a sequential fashion forming a multimeric L10(L12)X complex. In terms of processing, one or more lysine residues are methylated.

In terms of biological role, forms part of the ribosomal stalk which helps the ribosome interact with GTP-bound translation factors. The protein is Large ribosomal subunit protein uL11 of Streptococcus mutans serotype c (strain ATCC 700610 / UA159).